A 340-amino-acid polypeptide reads, in one-letter code: Latency-related protein 1 (340 aa).

Disordered stretches follow at residues 13–96 (AALW…PNRQ) and 254–340 (RLPG…PPRP). Tandem repeats lie at residues 27 to 43 (PTPT…PRTP) and 59 to 75 (PTPT…PRTP). The tract at residues 27–75 (PTPTHPHSHAPPLPRTPTPSHPHSRAPPLPRAPTPTHPHSHAPPLPRTP) is 2 X 17 AA repeats. The segment covering 35–73 (HAPPLPRTPTPSHPHSRAPPLPRAPTPTHPHSHAPPLPR) has biased composition (pro residues). Residues 287–307 (ARGGGSGGGRGPGGGRGGPRG) show a composition bias toward gly residues. Over residues 308-326 (SRGRGGRGRGGRGGGRRGR) the composition is skewed to basic residues.

In Human herpesvirus 1 (strain F) (HHV-1), this protein is Latency-related protein 1.